The chain runs to 95 residues: Large ribosomal subunit protein bL27 (95 aa).

Residues 1–9 constitute a propeptide that is removed on maturation; the sequence is MLKMNLQFF.

This sequence belongs to the bacterial ribosomal protein bL27 family. In terms of processing, the N-terminus is cleaved by ribosomal processing cysteine protease Prp.

The protein is Large ribosomal subunit protein bL27 of Lachnoclostridium phytofermentans (strain ATCC 700394 / DSM 18823 / ISDg) (Clostridium phytofermentans).